The primary structure comprises 458 residues: MALWGGRFTQAADQRFKQFNDSLRFDYRLAEQDIVGSVAWSKALVTVGVLTADEQRQLEEALNVLLEEVRANPQQILQSDAEDIHSWVEGKLIDKVGQLGKKLHTGRSRNDQVATDLKLWCKETVRELLTANRLLQSALVETAQVNQDAVMPGYTHLQRAQPVTFAHWCLAYVEMLARDESRLQDTLKRLDVSPLGCGALAGTAYEIDREQLAGWLGFASATRNSLDSVSDRDHVLELLSDAAIGMVHLSRFAEDLIFFNSGEAGFVELSDRVTSGSSLMPQKKNPDALELIRGKCGRVQGALTGMMMTLKGLPLAYNKDMQEDKEGLFDALDTWLDCLHMAALVLDGIQVKRPRCQEAAQQGYANATELADYLVAKGVPFREAHHIVGEAVVEAIRQGKPLEALPLADLQKFSRVIGDDVYPILSLQSCLDKRAAKGGVSPQQVAQAIDDARARLAL.

It belongs to the lyase 1 family. Argininosuccinate lyase subfamily.

The protein localises to the cytoplasm. It catalyses the reaction 2-(N(omega)-L-arginino)succinate = fumarate + L-arginine. It participates in amino-acid biosynthesis; L-arginine biosynthesis; L-arginine from L-ornithine and carbamoyl phosphate: step 3/3. In Salmonella paratyphi A (strain ATCC 9150 / SARB42), this protein is Argininosuccinate lyase.